Here is a 589-residue protein sequence, read N- to C-terminus: Multidrug transporter FLR2 (589 aa).

The interval 50 to 116 (KEEMKQDNQT…SSTKDASKPE (67 aa)) is disordered. Residues 56–73 (DNQTSTDSMSTSTQQETD) show a composition bias toward low complexity. The N-linked (GlcNAc...) asparagine glycan is linked to Asn-57. Positions 107–116 (SSTKDASKPE) are enriched in basic and acidic residues. Asn-136 carries N-linked (GlcNAc...) asparagine glycosylation. 12 helical membrane passes run 143-163 (TFVI…SSIY), 179-199 (VVGT…PIIF), 211-231 (MPLY…CALV), 234-254 (IAGL…VLAT), 275-295 (WAVG…AMVV), 301-321 (WIFW…IFFF), 378-398 (PIIL…YLFF), 417-437 (GLAF…LIIF), 455-475 (LFLI…FFFG), 480-500 (IHWI…FNLF), 516-536 (ASVF…FPLF), and 551-571 (VAWG…IPFV).

The protein belongs to the major facilitator superfamily.

The protein localises to the cell membrane. Functionally, multidrug transporter that confers resistance to 5-flucytosine (5-FC) and clotrimazole. Further confers azole drug resistance. Plays direct roles in extrusion of 5-flucytosine and clotrimazole. This Candida glabrata (strain ATCC 2001 / BCRC 20586 / JCM 3761 / NBRC 0622 / NRRL Y-65 / CBS 138) (Yeast) protein is Multidrug transporter FLR2.